The sequence spans 197 residues: Endothelial cell-specific chemotaxis regulator (197 aa).

Residues 1–23 (MGSVRETQLRWAILGFLLLQAAS) form the signal peptide. Residues 24–113 (ETPSQFSTEA…PSPTSETVLT (90 aa)) are Extracellular-facing. The disordered stretch occupies residues 40–107 (TVADHLPSSP…ADSTVPPSPT (68 aa)). The segment covering 50–63 (GPTWSQSQKHTSGL) has biased composition (polar residues). Positions 64-82 (SADVPSSGRSSDSMSGDTS) are enriched in low complexity. Residues 83–107 (HNVTSTSPNMSFRTTADSTVPPSPT) are compositionally biased toward polar residues. The chain crosses the membrane as a helical span at residues 114–134 (VAAFGVISFIAILVVVVIVLV). Residues 135 to 197 (SVVSLRFKCR…KGCPSAEKVL (63 aa)) lie on the Cytoplasmic side of the membrane. Disordered regions lie at residues 146 to 172 (NKES…GEKE) and 178 to 197 (SMKN…EKVL). Composition is skewed to polar residues over residues 155-168 (PGSS…STAN) and 178-189 (SMKNINMNNSKG). Ser187 bears the Phosphoserine mark.

Belongs to the ECSCR family. As to quaternary structure, interacts with FLNA. Interacts with the 20S proteasome subunit PSMA7. In terms of processing, may be heavily O-glycosylated.

It localises to the cell membrane. Its subcellular location is the cytoplasm. Functionally, regulates endothelial chemotaxis and tube formation. Has a role in angiogenesis and apoptosis via modulation of the actin cytoskeleton and facilitation of proteasomal degradation of the apoptosis inhibitors BIRC3/IAP1 and BIRC2/IAP2. The protein is Endothelial cell-specific chemotaxis regulator (ECSCR) of Bos taurus (Bovine).